The sequence spans 256 residues: Acetyl-coenzyme A carboxylase carboxyl transferase subunit alpha (256 aa).

The CoA carboxyltransferase C-terminal domain maps to 1–236 (MSDVARILKE…KTAIVDELAE (236 aa)).

This sequence belongs to the AccA family. As to quaternary structure, acetyl-CoA carboxylase is a heterohexamer composed of biotin carboxyl carrier protein (AccB), biotin carboxylase (AccC) and two subunits each of ACCase subunit alpha (AccA) and ACCase subunit beta (AccD).

The protein localises to the cytoplasm. It carries out the reaction N(6)-carboxybiotinyl-L-lysyl-[protein] + acetyl-CoA = N(6)-biotinyl-L-lysyl-[protein] + malonyl-CoA. Its pathway is lipid metabolism; malonyl-CoA biosynthesis; malonyl-CoA from acetyl-CoA: step 1/1. Component of the acetyl coenzyme A carboxylase (ACC) complex. First, biotin carboxylase catalyzes the carboxylation of biotin on its carrier protein (BCCP) and then the CO(2) group is transferred by the carboxyltransferase to acetyl-CoA to form malonyl-CoA. The polypeptide is Acetyl-coenzyme A carboxylase carboxyl transferase subunit alpha (Streptococcus thermophilus (strain ATCC BAA-250 / LMG 18311)).